The primary structure comprises 596 residues: DNA primase (596 aa).

The CHC2-type zinc finger occupies C41–C65. Positions D255 to G336 constitute a Toprim domain. Residues E261, D305, and D307 each coordinate Mg(2+).

It belongs to the DnaG primase family. As to quaternary structure, monomer. Interacts with DnaB. Zn(2+) is required as a cofactor. It depends on Mg(2+) as a cofactor.

It catalyses the reaction ssDNA + n NTP = ssDNA/pppN(pN)n-1 hybrid + (n-1) diphosphate.. Its function is as follows. RNA polymerase that catalyzes the synthesis of short RNA molecules used as primers for DNA polymerase during DNA replication. The sequence is that of DNA primase from Clostridium acetobutylicum (strain ATCC 824 / DSM 792 / JCM 1419 / IAM 19013 / LMG 5710 / NBRC 13948 / NRRL B-527 / VKM B-1787 / 2291 / W).